The sequence spans 491 residues: Calcium/calmodulin-dependent protein kinase type II delta 1 chain (491 aa).

Positions 13 to 271 (YQLYEELGKG…AAEALKHPWI (259 aa)) constitute a Protein kinase domain. Residues 19 to 27 (LGKGAFSVV) and Lys-42 each bind ATP. Catalysis depends on Asp-135, which acts as the Proton acceptor. Thr-286 carries the phosphothreonine modification. Position 314 is a phosphoserine (Ser-314). Positions 315 to 354 (SKNPYKKPDGVKEPQTTVIHNPTDGNKESSESTNTTIEDE) are disordered. The segment covering 328–338 (PQTTVIHNPTD) has biased composition (polar residues). At Thr-350 the chain carries Phosphothreonine.

This sequence belongs to the protein kinase superfamily. CAMK Ser/Thr protein kinase family. CaMK subfamily. As to quaternary structure, CAMK2 is composed of four different chains: alpha, beta, gamma, and delta. The different isoforms assemble into homo- or heteromultimeric holoenzymes composed of 8 to 12 subunits. As to expression, first detected at the 18-somite stage where expression is restricted to somite boundaries. At 24 hpf, expression is elevated in epidermal tissue and in the hatching gland. After 24 hpf, expression dimishes, but persists at low levels along the dorsal trunk. At 48 hpf, expression is restricted at a low level to the forebrain. At 72 hpf, weak expression reappears along the entire dorsal trunk in discrete cell bodies.

The catalysed reaction is L-seryl-[protein] + ATP = O-phospho-L-seryl-[protein] + ADP + H(+). It catalyses the reaction L-threonyl-[protein] + ATP = O-phospho-L-threonyl-[protein] + ADP + H(+). Autophosphorylation of CAMK2 plays an important role in the regulation of the kinase activity. In terms of biological role, caM-kinase II (CAMK2) is a prominent kinase in the central nervous system. This chain is Calcium/calmodulin-dependent protein kinase type II delta 1 chain, found in Danio rerio (Zebrafish).